The following is a 357-amino-acid chain: Ion-translocating oxidoreductase complex subunit D (357 aa).

The next 3 helical transmembrane spans lie at 35-55, 88-108, and 119-139; these read VWLY…TVLV, LPPW…VVLG, and LFNP…VEMT. Residue Thr176 is modified to FMN phosphoryl threonine. The next 5 membrane-spanning stretches (helical) occupy residues 209–229, 233–253, 261–281, 295–315, and 316–336; these read APGS…VYLI, VIAW…ATVF, YADA…FFIA, AVFA…GGYP, and EATA…DHWI.

The protein belongs to the NqrB/RnfD family. The complex is composed of six subunits: RnfA, RnfB, RnfC, RnfD, RnfE and RnfG. FMN is required as a cofactor.

The protein localises to the cell inner membrane. In terms of biological role, part of a membrane-bound complex that couples electron transfer with translocation of ions across the membrane. The sequence is that of Ion-translocating oxidoreductase complex subunit D from Halorhodospira halophila (strain DSM 244 / SL1) (Ectothiorhodospira halophila (strain DSM 244 / SL1)).